The chain runs to 577 residues: Vacuolar membrane amino acid uptake transporter fnx2 (577 aa).

Over residues 1–14 (MSNPRTKSPNTNRG) the composition is skewed to polar residues. The disordered stretch occupies residues 1–80 (MSNPRTKSPN…SPHRQDAATT (80 aa)). Residues 22 to 39 (SALLNDSLSSLNGNSSYD) show a composition bias toward low complexity. The segment covering 40-62 (SIKDSSKNNKDVAEVNEYPRRPE) has biased composition (basic and acidic residues). Transmembrane regions (helical) follow at residues 91–111 (VLPA…IVAS), 123–145 (FSQV…PLFG), 157–177 (LLAA…SRSL), 186–206 (IAGI…SDIV), 217–237 (IINV…GYFA), 244–264 (IGFL…YFTL), 286–306 (LILL…GGNV), 317–337 (LLIA…FVAF), 356–376 (LCNF…PLFF), 391–411 (LIPM…VISL), 418–438 (ITVG…RYGY), 448–468 (YPFS…VAII), 490–510 (GCVL…GIKL), and 547–567 (LLGS…CAFV).

Belongs to the major facilitator superfamily.

It localises to the vacuole. It is found in the membrane. Functionally, MFS-type transporter involved in vacuolar amino acid uptake. This is Vacuolar membrane amino acid uptake transporter fnx2 (fnx2) from Schizosaccharomyces pombe (strain 972 / ATCC 24843) (Fission yeast).